Here is a 161-residue protein sequence, read N- to C-terminus: Putative 4-hydroxy-4-methyl-2-oxoglutarate aldolase (161 aa).

Substrate is bound by residues 78–81 and R100; that span reads GDVI. D101 is a binding site for a divalent metal cation.

Belongs to the class II aldolase/RraA-like family. Homotrimer. It depends on a divalent metal cation as a cofactor.

The catalysed reaction is 4-hydroxy-4-methyl-2-oxoglutarate = 2 pyruvate. It catalyses the reaction oxaloacetate + H(+) = pyruvate + CO2. In terms of biological role, catalyzes the aldol cleavage of 4-hydroxy-4-methyl-2-oxoglutarate (HMG) into 2 molecules of pyruvate. Also contains a secondary oxaloacetate (OAA) decarboxylase activity due to the common pyruvate enolate transition state formed following C-C bond cleavage in the retro-aldol and decarboxylation reactions. This Mycobacterium avium (strain 104) protein is Putative 4-hydroxy-4-methyl-2-oxoglutarate aldolase.